A 137-amino-acid polypeptide reads, in one-letter code: Putative pre-16S rRNA nuclease (137 aa).

It belongs to the YqgF nuclease family.

The protein resides in the cytoplasm. Its function is as follows. Could be a nuclease involved in processing of the 5'-end of pre-16S rRNA. The protein is Putative pre-16S rRNA nuclease of Buchnera aphidicola subsp. Baizongia pistaciae (strain Bp).